We begin with the raw amino-acid sequence, 252 residues long: Triosephosphate isomerase (252 aa).

9–11 (NWK) is a binding site for substrate. The active-site Electrophile is the histidine 96. The Proton acceptor role is filled by glutamate 166. Substrate is bound by residues glycine 172, serine 212, and 233-234 (GG).

The protein belongs to the triosephosphate isomerase family. Homodimer.

It is found in the cytoplasm. It catalyses the reaction D-glyceraldehyde 3-phosphate = dihydroxyacetone phosphate. It participates in carbohydrate biosynthesis; gluconeogenesis. It functions in the pathway carbohydrate degradation; glycolysis; D-glyceraldehyde 3-phosphate from glycerone phosphate: step 1/1. Functionally, involved in the gluconeogenesis. Catalyzes stereospecifically the conversion of dihydroxyacetone phosphate (DHAP) to D-glyceraldehyde-3-phosphate (G3P). This is Triosephosphate isomerase from Chlorobium chlorochromatii (strain CaD3).